The primary structure comprises 268 residues: uncharacterized protein (268 aa).

The protein to yeast YKR075c.

This is an uncharacterized protein from Saccharomyces cerevisiae (strain ATCC 204508 / S288c) (Baker's yeast).